Reading from the N-terminus, the 157-residue chain is Regulator of Ty1 transposition protein 102 (157 aa).

Residue serine 77 is modified to Phosphoserine. Residues serine 95–asparagine 157 form a disordered region. Over residues leucine 96–glutamine 116 the composition is skewed to polar residues. Serine 122 bears the Phosphoserine mark. Basic and acidic residues predominate over residues asparagine 147–asparagine 157.

As to quaternary structure, interacts with STH1 and SWI3. Component of the two forms of the RSC complex composed of at least either RSC1 or RSC2, and ARP7, ARP9, LDB7, NPL6, RSC3, RSC30, RSC4, RSC58, RSC6, RSC8, RSC9, SFH1, STH1, HTL1 and probably RTT102. The complexes interact with histone and histone variant components of centromeric chromatin. Probable additional component of the SWI/SNF global transcription activator complex. The 1.14 MDa SWI/SNF complex is composed of 11 different subunits: one copy each of SWI1, SNF2/SWI2, SNF5, SNF12/SWP73, ARP7/SWP61, ARP9/SWP59; two copies each of SWI3, SNF6, SNF11, SWP82; and three copies of TAF14/SWP29.

The protein localises to the nucleus. Functionally, probable component of the chromatin structure-remodeling complex (RSC) which is involved in transcription regulation and nucleosome positioning. RSC is responsible for the transfer of a histone octamer from a nucleosome core particle to naked DNA. The reaction requires ATP and involves an activated RSC-nucleosome intermediate. Remodeling reaction also involves DNA translocation, DNA twist and conformational change. As a reconfigurer of centromeric and flanking nucleosomes, RSC complex is required both for proper kinetochore function in chromosome segregation and, via a PKC1-dependent signaling pathway, for organization of the cellular cytoskeleton. Probable component of the SWI/SNF complex, an ATP-dependent chromatin-remodeling complex, is required for the positive and negative regulation of gene expression of a large number of genes. It changes chromatin structure by altering DNA-histone contacts within a nucleosome, leading eventually to a change in nucleosome position, thus facilitating or repressing binding of gene-specific transcription factors. This Saccharomyces cerevisiae (strain ATCC 204508 / S288c) (Baker's yeast) protein is Regulator of Ty1 transposition protein 102 (RTT102).